Consider the following 489-residue polypeptide: Aspartyl/glutamyl-tRNA(Asn/Gln) amidotransferase subunit B (489 aa).

This sequence belongs to the GatB/GatE family. GatB subfamily. As to quaternary structure, heterotrimer of A, B and C subunits.

It catalyses the reaction L-glutamyl-tRNA(Gln) + L-glutamine + ATP + H2O = L-glutaminyl-tRNA(Gln) + L-glutamate + ADP + phosphate + H(+). The enzyme catalyses L-aspartyl-tRNA(Asn) + L-glutamine + ATP + H2O = L-asparaginyl-tRNA(Asn) + L-glutamate + ADP + phosphate + 2 H(+). Its function is as follows. Allows the formation of correctly charged Asn-tRNA(Asn) or Gln-tRNA(Gln) through the transamidation of misacylated Asp-tRNA(Asn) or Glu-tRNA(Gln) in organisms which lack either or both of asparaginyl-tRNA or glutaminyl-tRNA synthetases. The reaction takes place in the presence of glutamine and ATP through an activated phospho-Asp-tRNA(Asn) or phospho-Glu-tRNA(Gln). This chain is Aspartyl/glutamyl-tRNA(Asn/Gln) amidotransferase subunit B, found in Polynucleobacter asymbioticus (strain DSM 18221 / CIP 109841 / QLW-P1DMWA-1) (Polynucleobacter necessarius subsp. asymbioticus).